Consider the following 580-residue polypeptide: MNLFTDIRTLVIDSLAAMTAEGALPEGLDFANVTVEPPRDAAHGDMATNAAMVLAKPAKMKPRDIAEALAAKLAQDKRITSAEVAGPGFLNLRLDLSVWQDVLGKALNAEEAYGRSDMGQGKRVNVEYVSANPTGPLHVGHTRGAVFGDALASLLDFAGYDVTREYYINDGGAQVDVLARSAYLRYLEAHGQSVEFPDGTYPGEYLKDVGAALKDKFGDRFVGQPEETWLEEVRNFATDMMMDLIREDLALLGVEMDVFYSEKSLYGTGRIEAALESLDAKGLIYEGVLEPPKGKKPDDWEPRIQTLFKSTEHGDDVDRPVKKSDGAWTYFAPDIAYHYDKVSRGFDMLIDIFGADHGGYVKRMKAAVSALSDGKVPLDVKLCQLVKLFKDGQEFKMSKRAGTFVTLRDVVDAVGADVTRFMLLTRKNDQGFDFDLDKALEQSKDNPVFYVQYANARIHSTLRKAREAGIACDEATLSGADLSLLTHDAQLAVARKVAEWPRQVEIAARTNEPHRIAFFLYELASDLHGLYHLGKSEESLRFVNESSELATHANLALARAVSIVISAGLGILGVKPAQEM.

The 'HIGH' region motif lies at 131-141 (ANPTGPLHVGH).

The protein belongs to the class-I aminoacyl-tRNA synthetase family. In terms of assembly, monomer.

It localises to the cytoplasm. It catalyses the reaction tRNA(Arg) + L-arginine + ATP = L-arginyl-tRNA(Arg) + AMP + diphosphate. The polypeptide is Arginine--tRNA ligase (Ruegeria sp. (strain TM1040) (Silicibacter sp.)).